The sequence spans 256 residues: Pimeloyl-[acyl-carrier protein] methyl ester esterase (256 aa).

Residues 15–242 (HLVLLHGWGL…AAHAPFISHP (228 aa)) form the AB hydrolase-1 domain. Substrate-binding positions include Trp22, 82-83 (SL), and 143-147 (FLALQ). The active-site Nucleophile is the Ser82. Active-site residues include Asp207 and His235. A substrate-binding site is contributed by His235.

This sequence belongs to the AB hydrolase superfamily. Carboxylesterase BioH family. Monomer.

The protein resides in the cytoplasm. It carries out the reaction 6-carboxyhexanoyl-[ACP] methyl ester + H2O = 6-carboxyhexanoyl-[ACP] + methanol + H(+). Its pathway is cofactor biosynthesis; biotin biosynthesis. Its function is as follows. The physiological role of BioH is to remove the methyl group introduced by BioC when the pimeloyl moiety is complete. It allows to synthesize pimeloyl-ACP via the fatty acid synthetic pathway through the hydrolysis of the ester bonds of pimeloyl-ACP esters. The polypeptide is Pimeloyl-[acyl-carrier protein] methyl ester esterase (Escherichia coli O8 (strain IAI1)).